The following is a 330-amino-acid chain: Cathepsin K (330 aa).

Positions 1–16 (MWGLEVLLLLPMASFA) are cleaved as a signal peptide. A propeptide spans 17–115 (LYPEEILDTQ…TLYIPDWESR (99 aa)) (activation peptide). Asn104 carries N-linked (GlcNAc...) asparagine glycosylation. Disulfide bonds link Cys137/Cys178, Cys171/Cys211, and Cys270/Cys319. Cys140 is an active-site residue. Residues His277 and Asn297 contribute to the active site.

It belongs to the peptidase C1 family.

It localises to the lysosome. The protein resides in the secreted. The protein localises to the apical cell membrane. It catalyses the reaction Broad proteolytic activity. With small-molecule substrates and inhibitors, the major determinant of specificity is P2, which is preferably Leu, Met &gt; Phe, and not Arg.. Functionally, thiol protease involved in osteoclastic bone resorption and may participate partially in the disorder of bone remodeling. Displays potent endoprotease activity against fibrinogen at acid pH. May play an important role in extracellular matrix degradation. Involved in the release of thyroid hormone thyroxine (T4) by limited proteolysis of TG/thyroglobulin in the thyroid follicle lumen. This is Cathepsin K (CTSK) from Canis lupus familiaris (Dog).